Consider the following 374-residue polypeptide: Pectate lyase 1 (374 aa).

The signal sequence occupies residues 1–22 (MKYLLPSAAAGLLLLAAQPTMA). Cysteine 93 and cysteine 176 form a disulfide bridge. Ca(2+)-binding residues include aspartate 150, aspartate 152, glutamate 187, and aspartate 191. Arginine 239 is a catalytic residue. Cysteine 350 and cysteine 373 form a disulfide bridge.

It belongs to the polysaccharide lyase 1 family. PLADES subfamily. Ca(2+) is required as a cofactor.

It is found in the secreted. It carries out the reaction Eliminative cleavage of (1-&gt;4)-alpha-D-galacturonan to give oligosaccharides with 4-deoxy-alpha-D-galact-4-enuronosyl groups at their non-reducing ends.. It participates in glycan metabolism; pectin degradation; 2-dehydro-3-deoxy-D-gluconate from pectin: step 2/5. In terms of biological role, involved in maceration and soft-rotting of plant tissue. This Pectobacterium atrosepticum (strain SCRI 1043 / ATCC BAA-672) (Erwinia carotovora subsp. atroseptica) protein is Pectate lyase 1 (pel1).